Here is an 80-residue protein sequence, read N- to C-terminus: MKSSHIALLCIVVLSLFALHECCEQGGQRHSQKVNEACVPGPCHPLVPHCWCCEHLRGIRPQCCWSGSTGRDYCNQQCNL.

The signal sequence occupies residues 1 to 22 (MKSSHIALLCIVVLSLFALHEC). 4 disulfide bridges follow: cysteine 38–cysteine 52, cysteine 43–cysteine 78, cysteine 50–cysteine 74, and cysteine 53–cysteine 64.

This sequence belongs to the MEG family. As to expression, expressed in leaves.

The chain is EMBRYO SURROUNDING FACTOR 1-like protein 1 (ESFL1) from Arabidopsis thaliana (Mouse-ear cress).